Here is a 223-residue protein sequence, read N- to C-terminus: MHVLIPAAGSGRRMEAGKNKLLIDLEGESLIYWTLKSVFSASLVSWVGIIGQPNDKKKLLNSVKKFSNEIEWINGGNTRQESVFNGLNSLPSNAEKVLIHDGARCLINPDLINKCALELEENDAVILATKVTDTIKIVDNEGYIQQTPNRQNLWAAQTPQGFLVKKLREAHEMAIEKNWKVTDDASLFEMLNWQVRIIEGNSSNIKITSPLDLQIAKLFLKDY.

This sequence belongs to the IspD/TarI cytidylyltransferase family. IspD subfamily.

It catalyses the reaction 2-C-methyl-D-erythritol 4-phosphate + CTP + H(+) = 4-CDP-2-C-methyl-D-erythritol + diphosphate. Its pathway is isoprenoid biosynthesis; isopentenyl diphosphate biosynthesis via DXP pathway; isopentenyl diphosphate from 1-deoxy-D-xylulose 5-phosphate: step 2/6. Catalyzes the formation of 4-diphosphocytidyl-2-C-methyl-D-erythritol from CTP and 2-C-methyl-D-erythritol 4-phosphate (MEP). The protein is 2-C-methyl-D-erythritol 4-phosphate cytidylyltransferase of Prochlorococcus marinus (strain MIT 9515).